The primary structure comprises 530 residues: Vesicular acetylcholine transporter (530 aa).

Over 1–33 (MEPTAPTGQARAAATKLSEAVGAALQEPQRQRR) the chain is Cytoplasmic. The chain crosses the membrane as a helical span at residues 34-54 (LVLVIVCVALLLDNMLYMVIV). The Lumenal, vesicle portion of the chain corresponds to 55–125 (PIVPDYIAHM…PTESEDVKIG (71 aa)). Residues Asn89 and Asn96 are each glycosylated (N-linked (GlcNAc...) asparagine). The chain crosses the membrane as a helical span at residues 126 to 146 (VLFASKAILQLLVNPLSGPFI). The Cytoplasmic segment spans residues 147 to 152 (DRMSYD). A helical transmembrane segment spans residues 153-173 (VPLLIGLGVMFASTVMFAFAE). Topologically, residues 174 to 182 (DYATFFAAR) are lumenal, vesicle. A helical membrane pass occupies residues 183-203 (SLQGLGSAFADTSGIAMIADK). Over 204 to 213 (YPEEPERSRA) the chain is Cytoplasmic. Residues 214 to 234 (LGVALAFISFGSLVAPPFGGI) form a helical membrane-spanning segment. Over 235-242 (LYEFAGKR) the chain is Lumenal, vesicle. The helical transmembrane segment at 243 to 263 (VPFLVLAAVSLFDALLLLAVA) threads the bilayer. Topologically, residues 264–288 (KPFSAAARARANLPVGTPIHRLMLD) are cytoplasmic. Residues 289–309 (PYIAVVAGALTTCNIPLAFLE) traverse the membrane as a helical segment. Residues 310–325 (PTIATWMKHTMAASEW) are Lumenal, vesicle-facing. A helical transmembrane segment spans residues 326–346 (EMGMVWLPAFVPHVLGVYLTV). Residues 347-356 (RLAARYPHLQ) are Cytoplasmic-facing. The helical transmembrane segment at 357 to 377 (WLYGALGLAVIGVSSCVVPAC) threads the bilayer. Over 378 to 388 (RSFAPLVVSLC) the chain is Lumenal, vesicle. The chain crosses the membrane as a helical span at residues 389–409 (GLCFGIALVDTALLPTLAFLV). Residues 410–422 (DVRHVSVYGSVYA) are Cytoplasmic-facing. A helical membrane pass occupies residues 423 to 443 (IADISYSVAYALGPIVAGHIV). At 444-447 (HSLG) the chain is on the lumenal, vesicle side. The chain crosses the membrane as a helical span at residues 448–468 (FEQLSLGMGLANLLYAPVLLL). Residues 469–530 (LRNVGLLTRS…EDDYNYYSRS (62 aa)) are Cytoplasmic-facing. The interval 471 to 530 (NVGLLTRSRSERDVLLDEPPQGLYDAVRLREVQGKDGGEPCSPPGPFDGCEDDYNYYSRS) is mediates interaction with SEC14L1. The tract at residues 504 to 530 (GKDGGEPCSPPGPFDGCEDDYNYYSRS) is disordered.

This sequence belongs to the major facilitator superfamily. Vesicular transporter family. Interacts with SEC14L1. Expressed in the spinal cord, brain (excluding the cerebellum), brain stem and cholinergic tissues. Not expressed in peripheral tissues such as liver and kidney.

It is found in the cytoplasmic vesicle. The protein resides in the secretory vesicle. The protein localises to the synaptic vesicle membrane. The enzyme catalyses acetylcholine(out) + 2 H(+)(in) = acetylcholine(in) + 2 H(+)(out). It catalyses the reaction choline(in) + 2 H(+)(out) = choline(out) + 2 H(+)(in). It carries out the reaction serotonin(in) + 2 H(+)(out) = serotonin(out) + 2 H(+)(in). Functionally, electrogenic antiporter that exchanges one cholinergic neurotransmitter, acetylcholine or choline, with two intravesicular protons across the membrane of synaptic vesicles. Uses the electrochemical proton gradient established by the V-type proton-pump ATPase to store neurotransmitters inside the vesicles prior to their release via exocytosis. Determines cholinergic vesicular quantal size at presynaptic nerve terminals in developing neuro-muscular junctions with an impact on motor neuron differentiation and innervation pattern. Part of forebrain cholinergic system, regulates hippocampal synapse transmissions that underlie spatial memory formation. Can transport serotonin. The protein is Vesicular acetylcholine transporter (Slc18a3) of Mus musculus (Mouse).